Here is a 752-residue protein sequence, read N- to C-terminus: Zinc finger protein 425 (752 aa).

Positions 9 to 80 (VTFDDVALYF…EQGCLDKTRR (72 aa)) constitute a KRAB domain. 19 C2H2-type zinc fingers span residues 190–212 (YSCY…KRSH), 246–268 (FQCS…QVVH), 274–296 (YPCP…LCLH), 302–324 (FCCG…LRLH), 330–352 (FQCP…LTQH), 358–380 (FHCP…QRTH), 386–408 (FSCG…IRVH), 414–436 (FSCP…GLQH), 442–464 (FQCP…QRLH), 470–492 (FPCA…TRVH), 498–520 (FPCG…LKVH), 526–548 (FSCA…TRLH), 554–576 (FQCP…QRMH), 582–604 (FACG…LRLH), 610–632 (YQCP…LLQH), 638–660 (FSCV…IRVH), 666–688 (FQCP…LYKH), 694–716 (FQCP…LCLH), and 722–744 (FSCD…IAVH).

It belongs to the krueppel C2H2-type zinc-finger protein family.

It localises to the nucleus. The protein localises to the cytoplasm. Functionally, acts as a transcriptional repressor. This is Zinc finger protein 425 (ZNF425) from Homo sapiens (Human).